The primary structure comprises 85 residues: Kunitz-type serine protease inhibitor homolog beta-bungarotoxin B1 chain (85 aa).

Residues 1-24 (MSSGGLLLLLGLLTLCAELTPVSS) form the signal peptide. The BPTI/Kunitz inhibitor domain maps to 31 to 81 (CDKPPDKGNCGSVRRAFYYDTRLKTCKAFPYRGCNGNGNHFKTETLCRCEC). Disulfide bonds link C31-C81, C40-C64, and C56-C77.

This sequence belongs to the venom Kunitz-type family. In terms of assembly, heterodimer; disulfide-linked. The A chain has phospholipase A2 activity and the B chain shows homology with the basic protease inhibitors. As to expression, expressed by the venom gland.

Its subcellular location is the secreted. Functionally, beta-bungarotoxin is a presynaptic neurotoxin of the venom. The B chain is homologous to venom basic protease inhibitors but has no protease inhibitor activity and is non-toxic. The protein is Kunitz-type serine protease inhibitor homolog beta-bungarotoxin B1 chain of Bungarus candidus (Malayan krait).